A 238-amino-acid chain; its full sequence is Ribonuclease PH (238 aa).

Residues Arg86 and 124 to 126 each bind phosphate; that span reads GTR.

The protein belongs to the RNase PH family. Homohexameric ring arranged as a trimer of dimers.

The enzyme catalyses tRNA(n+1) + phosphate = tRNA(n) + a ribonucleoside 5'-diphosphate. In terms of biological role, phosphorolytic 3'-5' exoribonuclease that plays an important role in tRNA 3'-end maturation. Removes nucleotide residues following the 3'-CCA terminus of tRNAs; can also add nucleotides to the ends of RNA molecules by using nucleoside diphosphates as substrates, but this may not be physiologically important. Probably plays a role in initiation of 16S rRNA degradation (leading to ribosome degradation) during starvation. The sequence is that of Ribonuclease PH from Solibacter usitatus (strain Ellin6076).